Reading from the N-terminus, the 373-residue chain is DNA replication and repair protein RecF (373 aa).

Residue 30-37 coordinates ATP; the sequence is GENAQGKT.

This sequence belongs to the RecF family.

The protein resides in the cytoplasm. In terms of biological role, the RecF protein is involved in DNA metabolism; it is required for DNA replication and normal SOS inducibility. RecF binds preferentially to single-stranded, linear DNA. It also seems to bind ATP. The chain is DNA replication and repair protein RecF from Limosilactobacillus fermentum (strain NBRC 3956 / LMG 18251) (Lactobacillus fermentum).